Consider the following 727-residue polypeptide: Catalase-peroxidase (727 aa).

The interval 1-24 (MDQKSDSAGKCPVAHTAPRGRSNR) is disordered. Positions 95–217 (WHSAGTYRIT…LAAVQMGLIY (123 aa)) form a cross-link, tryptophyl-tyrosyl-methioninium (Trp-Tyr) (with M-243). Histidine 96 functions as the Proton acceptor in the catalytic mechanism. A cross-link (tryptophyl-tyrosyl-methioninium (Tyr-Met) (with W-95)) is located at residues 217 to 243 (YVNPEGPNGNPDPVAAARDIRETFARM). Histidine 258 is a heme b binding site.

The protein belongs to the peroxidase family. Peroxidase/catalase subfamily. Homodimer or homotetramer. Heme b serves as cofactor. In terms of processing, formation of the three residue Trp-Tyr-Met cross-link is important for the catalase, but not the peroxidase activity of the enzyme.

The enzyme catalyses H2O2 + AH2 = A + 2 H2O. The catalysed reaction is 2 H2O2 = O2 + 2 H2O. Its function is as follows. Bifunctional enzyme with both catalase and broad-spectrum peroxidase activity. This Rhizobium meliloti (strain 1021) (Ensifer meliloti) protein is Catalase-peroxidase.